The chain runs to 64 residues: Large ribosomal subunit protein bL35 (64 aa).

Residues 1–26 (MPKMKTKSAAAKRFKTTKSGKIKRKQ) are compositionally biased toward basic residues. The disordered stretch occupies residues 1–46 (MPKMKTKSAAAKRFKTTKSGKIKRKQAYTSHLAPNKTTKQKRHLRK).

The protein belongs to the bacterial ribosomal protein bL35 family.

This chain is Large ribosomal subunit protein bL35, found in Mycoplasmoides gallisepticum (strain R(low / passage 15 / clone 2)) (Mycoplasma gallisepticum).